Here is a 269-residue protein sequence, read N- to C-terminus: Small ribosomal subunit protein eS1 (269 aa).

Residues 1–20 are disordered; that stretch reads MAVGKNKGVSKGGKKGSKKK.

The protein belongs to the eukaryotic ribosomal protein eS1 family. Component of the small ribosomal subunit. Mature ribosomes consist of a small (40S) and a large (60S) subunit. The 40S subunit contains about 33 different proteins and 1 molecule of RNA (18S). The 60S subunit contains about 49 different proteins and 3 molecules of RNA (28S, 5.8S and 5S).

The protein localises to the cytoplasm. Functionally, has an essential role in oogenesis. The chain is Small ribosomal subunit protein eS1 from Anopheles gambiae (African malaria mosquito).